Here is a 291-residue protein sequence, read N- to C-terminus: Shikimate dehydrogenase (NADP(+)) (291 aa).

Shikimate contacts are provided by residues 23 to 25 (SFS) and Thr70. Catalysis depends on Lys74, which acts as the Proton acceptor. Asn95 and Asp110 together coordinate shikimate. Residues 135 to 139 (GAGGA) and Leu232 each bind NADP(+). Residue Tyr234 coordinates shikimate. Gly255 is an NADP(+) binding site.

The protein belongs to the shikimate dehydrogenase family. In terms of assembly, homodimer.

The catalysed reaction is shikimate + NADP(+) = 3-dehydroshikimate + NADPH + H(+). Its pathway is metabolic intermediate biosynthesis; chorismate biosynthesis; chorismate from D-erythrose 4-phosphate and phosphoenolpyruvate: step 4/7. In terms of biological role, involved in the biosynthesis of the chorismate, which leads to the biosynthesis of aromatic amino acids. Catalyzes the reversible NADPH linked reduction of 3-dehydroshikimate (DHSA) to yield shikimate (SA). This Desulforamulus reducens (strain ATCC BAA-1160 / DSM 100696 / MI-1) (Desulfotomaculum reducens) protein is Shikimate dehydrogenase (NADP(+)).